Reading from the N-terminus, the 174-residue chain is MKPSNIRIRAAKPIDFPKVAAMHYPVWRQSWTGILDPYLLDMIGSPKLWVEESYPQSLKRGGWSMWIAESGGQPIGMTMFGPDIAHPDRIQIDALYVAENSQRHGIGGRLLNRALHSHPSADMILWCAEKNSKARGFYEKKDFHIDGRTFTWKPLSGVNVPHVGYRLYRSAPPG.

Residues 6 to 172 (IRIRAAKPID…VGYRLYRSAP (167 aa)) form the N-acetyltransferase domain.

This sequence belongs to the acetyltransferase family.

The chain is Probable N-acetyltransferase Rv2775 from Mycobacterium tuberculosis (strain ATCC 25618 / H37Rv).